Consider the following 679-residue polypeptide: UvrABC system protein B (679 aa).

Residues 31–414 (ENLTDGLAHQ…ELEKSGTEII (384 aa)) enclose the Helicase ATP-binding domain. 44 to 51 (GVTGSGKT) contributes to the ATP binding site. Residues 97–120 (YYDYYQPEAYVPSSDTFIEKDASI) carry the Beta-hairpin motif. Positions 436–589 (QVDDLLSEAR…QIKYNEEHGI (154 aa)) constitute a Helicase C-terminal domain. A UVR domain is found at 639 to 674 (QQQIKKLEQQMYKFAQDLEFEKAAAIRDQLHQLREQ).

This sequence belongs to the UvrB family. Forms a heterotetramer with UvrA during the search for lesions. Interacts with UvrC in an incision complex.

The protein localises to the cytoplasm. Its function is as follows. The UvrABC repair system catalyzes the recognition and processing of DNA lesions. A damage recognition complex composed of 2 UvrA and 2 UvrB subunits scans DNA for abnormalities. Upon binding of the UvrA(2)B(2) complex to a putative damaged site, the DNA wraps around one UvrB monomer. DNA wrap is dependent on ATP binding by UvrB and probably causes local melting of the DNA helix, facilitating insertion of UvrB beta-hairpin between the DNA strands. Then UvrB probes one DNA strand for the presence of a lesion. If a lesion is found the UvrA subunits dissociate and the UvrB-DNA preincision complex is formed. This complex is subsequently bound by UvrC and the second UvrB is released. If no lesion is found, the DNA wraps around the other UvrB subunit that will check the other stand for damage. The polypeptide is UvrABC system protein B (Haemophilus influenzae (strain 86-028NP)).